A 208-amino-acid polypeptide reads, in one-letter code: FMN-dependent NADH:quinone oxidoreductase 1 (208 aa).

This sequence belongs to the azoreductase type 1 family. As to quaternary structure, homodimer. The cofactor is FMN.

The catalysed reaction is 2 a quinone + NADH + H(+) = 2 a 1,4-benzosemiquinone + NAD(+). It catalyses the reaction N,N-dimethyl-1,4-phenylenediamine + anthranilate + 2 NAD(+) = 2-(4-dimethylaminophenyl)diazenylbenzoate + 2 NADH + 2 H(+). Functionally, quinone reductase that provides resistance to thiol-specific stress caused by electrophilic quinones. Also exhibits azoreductase activity. Catalyzes the reductive cleavage of the azo bond in aromatic azo compounds to the corresponding amines. The protein is FMN-dependent NADH:quinone oxidoreductase 1 of Bacillus thuringiensis subsp. konkukian (strain 97-27).